The sequence spans 148 residues: NADPH-dependent 7-cyano-7-deazaguanine reductase (148 aa).

The Thioimide intermediate role is filled by Cys50. Asp57 functions as the Proton donor in the catalytic mechanism. Substrate is bound by residues 72 to 74 (VES) and 91 to 92 (HE).

It belongs to the GTP cyclohydrolase I family. QueF type 1 subfamily.

The protein resides in the cytoplasm. It catalyses the reaction 7-aminomethyl-7-carbaguanine + 2 NADP(+) = 7-cyano-7-deazaguanine + 2 NADPH + 3 H(+). Its pathway is tRNA modification; tRNA-queuosine biosynthesis. Functionally, catalyzes the NADPH-dependent reduction of 7-cyano-7-deazaguanine (preQ0) to 7-aminomethyl-7-deazaguanine (preQ1). This is NADPH-dependent 7-cyano-7-deazaguanine reductase from Helicobacter pylori (strain P12).